Consider the following 160-residue polypeptide: Lipoprotein signal peptidase (160 aa).

The next 2 membrane-spanning stretches (helical) occupy residues 59 to 79 (PEGI…YVWI) and 84 to 104 (SPLF…NLID). Active-site residues include Asp113 and Asp139. A helical transmembrane segment spans residues 132-152 (WPIFNIADACITIGACLLFFF).

It belongs to the peptidase A8 family.

It localises to the cell inner membrane. The enzyme catalyses Release of signal peptides from bacterial membrane prolipoproteins. Hydrolyzes -Xaa-Yaa-Zaa-|-(S,diacylglyceryl)Cys-, in which Xaa is hydrophobic (preferably Leu), and Yaa (Ala or Ser) and Zaa (Gly or Ala) have small, neutral side chains.. The protein operates within protein modification; lipoprotein biosynthesis (signal peptide cleavage). This protein specifically catalyzes the removal of signal peptides from prolipoproteins. The chain is Lipoprotein signal peptidase from Chlorobaculum parvum (strain DSM 263 / NCIMB 8327) (Chlorobium vibrioforme subsp. thiosulfatophilum).